Consider the following 606-residue polypeptide: NADH-ubiquinone oxidoreductase chain 5 (606 aa).

Transmembrane regions (helical) follow at residues Phe-4–Ile-24, Asn-38–Gly-58, Met-87–Tyr-107, Ile-114–Ala-134, Leu-140–Gly-160, Ala-171–Phe-191, Leu-213–Leu-233, Thr-241–Ile-261, Val-273–Leu-293, Ile-301–Asn-320, Ala-325–Ile-347, Met-366–Leu-386, Leu-409–Phe-429, Leu-457–Ile-477, Leu-488–Thr-508, and Leu-583–Met-603.

The protein belongs to the complex I subunit 5 family. In terms of assembly, core subunit of respiratory chain NADH dehydrogenase (Complex I) which is composed of 45 different subunits.

The protein resides in the mitochondrion inner membrane. The catalysed reaction is a ubiquinone + NADH + 5 H(+)(in) = a ubiquinol + NAD(+) + 4 H(+)(out). Core subunit of the mitochondrial membrane respiratory chain NADH dehydrogenase (Complex I) which catalyzes electron transfer from NADH through the respiratory chain, using ubiquinone as an electron acceptor. Essential for the catalytic activity and assembly of complex I. This is NADH-ubiquinone oxidoreductase chain 5 (MT-ND5) from Ceratotherium simum (White rhinoceros).